The sequence spans 119 residues: Small capsomere-interacting protein (119 aa).

Belongs to the herpesviridae small capsomere-interacting protein family. As to quaternary structure, interacts with the major capsid protein/MCP.

It localises to the virion. The protein resides in the host nucleus. Its function is as follows. Participates in the assembly of the infectious particles by decorating the outer surface of the capsid shell and thus forming a layer between the capsid and the tegument. Complexes composed of the major capsid protein and small capsomere-interacting protein/SCP assemble together in the host cytoplasm and are translocated to the nucleus, where they accumulate and participate in capsid assembly. This Equine herpesvirus 1 (strain V592) (EHV-1) protein is Small capsomere-interacting protein.